The primary structure comprises 249 residues: Metallo-beta-lactamase type 2 (249 aa).

The signal sequence occupies residues 1–18 (MKTVFILISMLFPVAVMA). Zn(2+)-binding residues include histidine 99, histidine 101, aspartate 103, histidine 162, and cysteine 181. Substrate-binding residues include lysine 184 and asparagine 193. Position 223 (histidine 223) interacts with Zn(2+).

This sequence belongs to the metallo-beta-lactamase superfamily. Class-B beta-lactamase family. As to quaternary structure, monomer. It depends on Zn(2+) as a cofactor.

It localises to the periplasm. It carries out the reaction a beta-lactam + H2O = a substituted beta-amino acid. Its activity is regulated as follows. Competitively inhibited by 4-morpholineethanesulfonic acid (MES), SB236050 and biphenyl tetrazoles (BPTs). Also inhibited by chelating agents such as EDTA and 1,10-phenanthroline. CcrA is not susceptible to inactivation by the beta-lactamase-blocking agents clavulanic acid or tazobactam. In terms of biological role, confers resistance to the different beta-lactams antibiotics (penicillin, cephalosporin and carbapenem) via the hydrolysis of the beta-lactam ring. This is Metallo-beta-lactamase type 2 from Bacteroides fragilis.